Consider the following 499-residue polypeptide: Probable cytosol aminopeptidase (499 aa).

Mn(2+)-binding residues include Lys-267 and Asp-272. Lys-279 is a catalytic residue. Mn(2+)-binding residues include Asp-290, Asp-349, and Glu-351. The active site involves Arg-353.

The protein belongs to the peptidase M17 family. It depends on Mn(2+) as a cofactor.

It is found in the cytoplasm. It carries out the reaction Release of an N-terminal amino acid, Xaa-|-Yaa-, in which Xaa is preferably Leu, but may be other amino acids including Pro although not Arg or Lys, and Yaa may be Pro. Amino acid amides and methyl esters are also readily hydrolyzed, but rates on arylamides are exceedingly low.. The enzyme catalyses Release of an N-terminal amino acid, preferentially leucine, but not glutamic or aspartic acids.. In terms of biological role, presumably involved in the processing and regular turnover of intracellular proteins. Catalyzes the removal of unsubstituted N-terminal amino acids from various peptides. The sequence is that of Probable cytosol aminopeptidase from Buchnera aphidicola subsp. Acyrthosiphon pisum (strain 5A).